A 248-amino-acid chain; its full sequence is 2,3-bisphosphoglycerate-dependent phosphoglycerate mutase (248 aa).

Residues 8-15, 21-22, Arg-60, 87-90, Lys-98, 114-115, and 183-184 contribute to the substrate site; these read RHGESEWN, TG, ERHY, RR, and GN. The Tele-phosphohistidine intermediate role is filled by His-9. Glu-87 serves as the catalytic Proton donor/acceptor.

This sequence belongs to the phosphoglycerate mutase family. BPG-dependent PGAM subfamily.

It catalyses the reaction (2R)-2-phosphoglycerate = (2R)-3-phosphoglycerate. It functions in the pathway carbohydrate degradation; glycolysis; pyruvate from D-glyceraldehyde 3-phosphate: step 3/5. Its function is as follows. Catalyzes the interconversion of 2-phosphoglycerate and 3-phosphoglycerate. This chain is 2,3-bisphosphoglycerate-dependent phosphoglycerate mutase, found in Borreliella burgdorferi (strain ATCC 35210 / DSM 4680 / CIP 102532 / B31) (Borrelia burgdorferi).